Consider the following 447-residue polypeptide: Gastrin/cholecystokinin type B receptor (447 aa).

Residues 1–57 (MELLKLNRSVQGTGPGPGASLCRPGAPLLNSSSVGNLSCEPPRIRGAGTRELELAIR) are Extracellular-facing. Residues Asn7, Asn30, and Asn36 are each glycosylated (N-linked (GlcNAc...) asparagine). The chain crosses the membrane as a helical span at residues 58–79 (ITLYAVIFLMSVGGNMLIIVVL). The Cytoplasmic segment spans residues 80-87 (GLSRRLRT). Residues 88–109 (VTNAFLLSLAVSDLLLAVACMP) form a helical membrane-spanning segment. Residues 110 to 131 (FTLLPNLMGTFIFGTVICKAVS) are Extracellular-facing. Residues Cys127 and Cys205 are joined by a disulfide bond. Residues 132–150 (YLMGVSVSVSTLSLVAIAL) form a helical membrane-spanning segment. Over 151-170 (ERYSAICRPLQARVWQTRSH) the chain is Cytoplasmic. The chain crosses the membrane as a helical span at residues 171–189 (AARVIVATWLLSGLLMVPY). Residues 190–219 (PVYTVVQPVGPRVLQCVHRWPSARVRQTWS) lie on the Extracellular side of the membrane. A helical membrane pass occupies residues 220–242 (VLLLLLLFFIPGVVMAVAYGLIS). The Cytoplasmic portion of the chain corresponds to 243–333 (RELYLGLRFD…KLLAKKRVVR (91 aa)). Positions 258 to 285 (DSQSRVRNQGGLPGAVHQNGRCRPETGA) are disordered. The chain crosses the membrane as a helical span at residues 334–355 (MLLVIVVLFFLCWLPVYSANTW). At 356-373 (RAFDGPGAHRALSGAPIS) the chain is on the extracellular side. The helical transmembrane segment at 374–394 (FIHLLSYASACVNPLVYCFMH) threads the bilayer. The Cytoplasmic portion of the chain corresponds to 395 to 447 (RRFRQACLETCARCCPRPPRARPRALPDEDPPTPSIASLSRLSYTTISTLGPG). Residue Cys408 is the site of S-palmitoyl cysteine attachment.

The protein belongs to the G-protein coupled receptor 1 family. As to expression, isoform 1 is expressed in brain, pancreas, stomach, the colon cancer cell line LoVo and the T-lymphoblastoma Jurkat, but not in heart, placenta, liver, lung, skeletal muscle, kidney or the stomach cancer cell line AGS. Expressed at high levels in the small cell lung cancer cell line NCI-H510, at lower levels in NCI-H345, NCI-H69 and GLC-28 cell lines, not expressed in GLC-19 cell line. Within the stomach, expressed at high levels in the mucosa of the gastric fundus and at low levels in the antrum and duodenum. Isoform 2 is present in pancreatic cancer cells and colorectal cancer cells, but not in normal pancreas or colonic mucosa. Isoform 3 is expressed in brain, pancreas, stomach, the stomach cancer cell line AGS and the colon cancer cell line LoVo.

It is found in the cell membrane. In terms of biological role, receptor for gastrin and cholecystokinin. The CCK-B receptors occur throughout the central nervous system where they modulate anxiety, analgesia, arousal, and neuroleptic activity. This receptor mediates its action by association with G proteins that activate a phosphatidylinositol-calcium second messenger system. Functionally, isoform 2 is constitutively activated and may regulate cancer cell proliferation via a gastrin-independent mechanism. The sequence is that of Gastrin/cholecystokinin type B receptor from Homo sapiens (Human).